The primary structure comprises 366 residues: D-alanine--D-alanine ligase (366 aa).

Residues 145 to 348 form the ATP-grasp domain; it reads KRLLDDAGLA…YQSLITKLIE (204 aa). ATP is bound at residue 175-230; sequence VEQLGLPLFIKPANLGSSVGISKVNNEAEFNAALSMAFEYDLKVIIESAIVGREIE. Residues D302, E315, and N317 each contribute to the Mg(2+) site.

This sequence belongs to the D-alanine--D-alanine ligase family. Requires Mg(2+) as cofactor. It depends on Mn(2+) as a cofactor.

It localises to the cytoplasm. The catalysed reaction is 2 D-alanine + ATP = D-alanyl-D-alanine + ADP + phosphate + H(+). It participates in cell wall biogenesis; peptidoglycan biosynthesis. Its function is as follows. Cell wall formation. The chain is D-alanine--D-alanine ligase from Proteus mirabilis (strain HI4320).